The sequence spans 122 residues: Selenoprotein H (122 aa).

Lys-20 carries the post-translational modification N6-acetyllysine. Positions 41–44 (CTSU) form a cross-link, cysteinyl-selenocysteine (Cys-Sec); redox-active. Sec-44 is a non-standard amino acid (selenocysteine).

The protein belongs to the SelWTH family.

Its function is as follows. May be involved in a redox-related process. The chain is Selenoprotein H from Homo sapiens (Human).